A 248-amino-acid polypeptide reads, in one-letter code: Acetylglutamate kinase (248 aa).

Substrate is bound by residues 36–37, Arg58, and Asn147; that span reads GG.

It belongs to the acetylglutamate kinase family. ArgB subfamily.

It is found in the cytoplasm. It carries out the reaction N-acetyl-L-glutamate + ATP = N-acetyl-L-glutamyl 5-phosphate + ADP. It participates in amino-acid biosynthesis; L-arginine biosynthesis; N(2)-acetyl-L-ornithine from L-glutamate: step 2/4. Catalyzes the ATP-dependent phosphorylation of N-acetyl-L-glutamate. In Thermus thermophilus (strain ATCC BAA-163 / DSM 7039 / HB27), this protein is Acetylglutamate kinase.